A 350-amino-acid polypeptide reads, in one-letter code: Small ribosomal subunit biogenesis GTPase RsgA (350 aa).

Residues 1–17 (MSKNKLSKGQQRRVNAN) show a composition bias toward polar residues. The interval 1–33 (MSKNKLSKGQQRRVNANHQRRLKTSKEKPDYDD) is disordered. The CP-type G domain occupies 104–273 (TSVLTRPDFY…VIDSPGVREF (170 aa)). Residues 160–163 (NKID) and 214–222 (GQSGVGKSS) each bind GTP. Residues C297, C302, H304, and C310 each coordinate Zn(2+).

Belongs to the TRAFAC class YlqF/YawG GTPase family. RsgA subfamily. Monomer. Associates with 30S ribosomal subunit, binds 16S rRNA. The cofactor is Zn(2+).

Its subcellular location is the cytoplasm. One of several proteins that assist in the late maturation steps of the functional core of the 30S ribosomal subunit. Helps release RbfA from mature subunits. May play a role in the assembly of ribosomal proteins into the subunit. Circularly permuted GTPase that catalyzes slow GTP hydrolysis, GTPase activity is stimulated by the 30S ribosomal subunit. This Escherichia coli O6:H1 (strain CFT073 / ATCC 700928 / UPEC) protein is Small ribosomal subunit biogenesis GTPase RsgA.